We begin with the raw amino-acid sequence, 1465 residues long: DNA polymerase III polC-type (1465 aa).

One can recognise an Exonuclease domain in the interval 427–583; the sequence is YVVFDVETTG…YDAEATGRLL (157 aa).

Belongs to the DNA polymerase type-C family. PolC subfamily.

It localises to the cytoplasm. It catalyses the reaction DNA(n) + a 2'-deoxyribonucleoside 5'-triphosphate = DNA(n+1) + diphosphate. In terms of biological role, required for replicative DNA synthesis. This DNA polymerase also exhibits 3' to 5' exonuclease activity. The protein is DNA polymerase III polC-type of Streptococcus pyogenes serotype M3 (strain ATCC BAA-595 / MGAS315).